A 673-amino-acid chain; its full sequence is Capsid protein (673 aa).

The disordered stretch occupies residues 575–595 (NLPTDSSLESDSDSEPAPKKK).

Belongs to the anelloviridae capsid protein family.

The protein localises to the virion. In terms of biological role, self-assembles to form an icosahedral capsid with a T=1 symmetry, about 30 nm in diameter, and consisting of 60 capsid proteins. The capsid encapsulates the genomic DNA. Capsid protein is involved in attachment and entry into the host cell. In Homo sapiens (Human), this protein is Capsid protein.